A 479-amino-acid chain; its full sequence is ATP synthase subunit beta, chloroplastic (479 aa).

156–163 contributes to the ATP binding site; that stretch reads GGAGVGKT.

The protein belongs to the ATPase alpha/beta chains family. As to quaternary structure, F-type ATPases have 2 components, CF(1) - the catalytic core - and CF(0) - the membrane proton channel. CF(1) has five subunits: alpha(3), beta(3), gamma(1), delta(1), epsilon(1). CF(0) has four main subunits: a(1), b(1), b'(1) and c(9-12).

The protein resides in the plastid. It is found in the chloroplast thylakoid membrane. The catalysed reaction is ATP + H2O + 4 H(+)(in) = ADP + phosphate + 5 H(+)(out). Produces ATP from ADP in the presence of a proton gradient across the membrane. The catalytic sites are hosted primarily by the beta subunits. The chain is ATP synthase subunit beta, chloroplastic from Trichomanes davallioides (Kilau fern).